We begin with the raw amino-acid sequence, 626 residues long: MSQNQETRGFQSEVKQLLQLMIHSLYSNKEIFLRELISNASDAADKLRFKALSNPALYEGDGDLRVRVSFDADKGTITISDNGIGMTREQVIDHLGTIAKSGTKEFLTALGQDQAKNSQLIGQFGVGFYSAFIVADKVTVKTRAAGEEADKAVLWESAGEGEYSVADIEKKSRGTDVILHLCEDEKEFLNEWRLREIIGKYSDHIGLPVEMLTKEYDDEGKECGEKWEKINKSDALWTRSKNDVSDEEYKAFYKHLSHDFADPVTWAHNKVEGNQAYTSLLYVPAKAPWDLFNREHKHGLKLYVQRVFIMDDAEQFMPNYLRFMRGLIDSNDLPLNVSREILQDNKITAALRKALTKRSLQMLEKLAKDDAEKYLQFWKEFGLVLKEGPTEDFANKETVAKLLRFASTHNDGSEQAVSLEDYILRMKEGQKAIYYITADSYVAAKNSPHLELFNKKGIEVLLLSDRIDEWMLSYLTEFDGKQLQSITKADLDLGDLADKESETQKQQDEAFGSFIERVKNLLGERVKTVRLTHNLTDTPAVVSTDNDQMTTQMAKLFAAAGQPVPEVKYTFELNPEHHLVKKVADIADETEFADWVELLLEQAMLAERGSLENPAAFIKRINKLLG.

The a; substrate-binding stretch occupies residues 1-339 (MSQNQETRGF…SNDLPLNVSR (339 aa)). The b stretch occupies residues 340–555 (EILQDNKITA…NDQMTTQMAK (216 aa)). Residues 556–626 (LFAAAGQPVP…FIKRINKLLG (71 aa)) are c.

This sequence belongs to the heat shock protein 90 family. Homodimer.

The protein localises to the cytoplasm. In terms of biological role, molecular chaperone. Has ATPase activity. In Haemophilus influenzae (strain PittEE), this protein is Chaperone protein HtpG.